The sequence spans 25 residues: C-reactive protein P2 subunit 4 (25 aa).

In terms of domain architecture, Pentraxin (PTX) spans 1 to 25; it reads GRSLVFPEETANSFVELFPAKELSL.

The protein belongs to the pentraxin family. In terms of assembly, heteropentamer. Discoid arrangement of 5 non-covalently bound subunits 1, 2, 3 and 4. The cofactor is Ca(2+). In terms of processing, glycosylated.

It localises to the secreted. Functionally, displays several functions associated with host defense: it promotes agglutination, bacterial capsular swelling, phagocytosis, and complement fixation through its calcium-dependent binding to phosphorylcholine. This chain is C-reactive protein P2 subunit 4, found in Gadus morhua (Atlantic cod).